A 378-amino-acid polypeptide reads, in one-letter code: Rhodopsin (378 aa).

Residues 1–53 (MMSIASGPSHAAYTWASQGGGFGNQTVVDKVPPEMLHMVDAHWYQFPPMNPLW) lie on the Extracellular side of the membrane. An N-linked (GlcNAc...) asparagine glycan is attached at Asn24. The chain crosses the membrane as a helical span at residues 54 to 78 (HALLGFVIGVLGVISVIGNGMVIYI). Residues 79-90 (FTTTKSLRTPSN) lie on the Cytoplasmic side of the membrane. A helical transmembrane segment spans residues 91-115 (LLVVNLAISDFLMMLCMSPAMVINC). The Extracellular segment spans residues 116 to 130 (YYETWVLGPLFCELY). A disulfide bridge links Cys127 with Cys204. Residues 131-150 (GLAGSLFGCASIWTMTMIAF) form a helical membrane-spanning segment. Topologically, residues 151-169 (DRYNVIVKGLSAKPMTING) are cytoplasmic. Residues 170 to 193 (ALIRILTIWFFTLAWTIAPMFGWN) form a helical membrane-spanning segment. The Extracellular segment spans residues 194 to 217 (RYVPEGNMTACGTDYLTKDLFSRS). A glycan (N-linked (GlcNAc...) asparagine) is linked at Asn200. Residues 218 to 245 (YILIYSIFVYFTPLFLIIYSYFFIIQAV) traverse the membrane as a helical segment. Over 246–280 (AAHEKNMREQAKKMNVASLRSAENQSTSAECKLAK) the chain is Cytoplasmic. Residues 281 to 304 (VALMTISLWFMAWTPYLVINYSGI) traverse the membrane as a helical segment. Over 305 to 311 (FETTKIS) the chain is Extracellular. The chain crosses the membrane as a helical span at residues 312–336 (PLFTIWGSLFAKANAVYNPIVYGIS). N6-(retinylidene)lysine is present on Lys323. At 337 to 378 (HPKYRAALFQKFPSLACTTEPTGADTMSTTTTVTEGNEKPAA) the chain is on the cytoplasmic side.

It belongs to the G-protein coupled receptor 1 family. Opsin subfamily. Post-translationally, phosphorylated on some or all of the serine and threonine residues present in the C-terminal region.

The protein resides in the membrane. Its function is as follows. Visual pigments are the light-absorbing molecules that mediate vision. They consist of an apoprotein, opsin, covalently linked to cis-retinal. This is Rhodopsin from Camponotus atriceps (Florida carpenter ant).